The following is a 308-amino-acid chain: uncharacterized protein (308 aa).

The 67-residue stretch at 15-81 (MRVDTGLARL…QNTPIDIEGM (67 aa)) folds into the S4 RNA-binding domain. Residue Asp-139 is part of the active site.

The protein belongs to the pseudouridine synthase RluA family.

The enzyme catalyses a uridine in RNA = a pseudouridine in RNA. This is an uncharacterized protein from Mycobacterium tuberculosis (strain CDC 1551 / Oshkosh).